A 293-amino-acid polypeptide reads, in one-letter code: MAIPKIASYPLPVSLPTNKVDWRIDASRAVLLIHDMQEYFVHYFDSQAEPIPSLIKHIQQLKAHAKQAGIPVVYTAQPANQDPAERALLSDFWGPGLSEETAIIAPLAPESGDVQLTKWRYSAFKKSPLLDWLRETGRDQLIITGVYAHIGILSTALDAFMFDIQPFVIGDGVADFSLSDHEFSLRYISGRTGAVKSTQQACLEIAAQHSKLTGLSLRTMQHDVAAALNLSVDEVDVQENLLFLGLDSIRAIQLLEKWKAQGADISFAQLMEHVTLQQWWQTIQANLHQPCSA.

The 77-residue stretch at Lys-211 to Leu-287 folds into the Carrier domain. Ser-248 carries the O-(pantetheine 4'-phosphoryl)serine modification.

The protein belongs to the isochorismatase family. Pantetheine 4'-phosphate is required as a cofactor.

It carries out the reaction isochorismate + H2O = (2S,3S)-2,3-dihydroxy-2,3-dihydrobenzoate + pyruvate. It functions in the pathway siderophore biosynthesis; vibriobactin biosynthesis. Involved in the biosynthesis of the catechol siderophore vibriobactin. Vibriobactin is a chelating compound involved in transporting iron from the bacterial environment into the cell cytoplasm. The protein is Vibriobactin-specific isochorismatase (vibB) of Vibrio cholerae serotype O1 (strain ATCC 39541 / Classical Ogawa 395 / O395).